The chain runs to 252 residues: Small ribosomal subunit protein eS1 (252 aa).

This sequence belongs to the eukaryotic ribosomal protein eS1 family. Component of the small ribosomal subunit. Mature ribosomes consist of a small (40S) and a large (60S) subunit. The 40S subunit contains about 33 different proteins and 1 molecule of RNA (18S). The 60S subunit contains about 49 different proteins and 3 molecules of RNA (25S, 5.8S and 5S).

The protein resides in the cytoplasm. The chain is Small ribosomal subunit protein eS1 from Enterocytozoon bieneusi (strain H348) (Microsporidian parasite).